A 436-amino-acid polypeptide reads, in one-letter code: UPF0597 protein YhaM (436 aa).

The protein belongs to the UPF0597 family.

This Salmonella choleraesuis (strain SC-B67) protein is UPF0597 protein YhaM.